A 1555-amino-acid chain; its full sequence is Bromodomain adjacent to zinc finger domain protein 1A (1555 aa).

A required for association with the CHRAC1/POLE3 complex region spans residues 1–128; the sequence is MPLLHRKPFV…EETVEVIRNN (128 aa). The segment at 1–128 is required for interaction with the CHRAC1-POLE3 heterodimer. Required for interaction with the CHRAC1-POLE3 heterodimer; the sequence is MPLLHRKPFV…EETVEVIRNN (128 aa). The interval 1–133 is required for interaction with NCOR1; that stretch reads MPLLHRKPFV…VIRNNGTRLQ (133 aa). In terms of domain architecture, WAC spans 22–128; the sequence is EEVFYCKVTN…EETVEVIRNN (107 aa). 2 positions are modified to phosphoserine: Ser-270 and Ser-284. Positions 422 to 488 constitute a DDT domain; that stretch reads PEVFGDALMV…LTAIFQAMAE (67 aa). Residues 635 to 701 adopt a coiled-coil conformation; sequence IEDYVDVLRQ…EDEQRNSAAV (67 aa). 2 stretches are compositionally biased toward basic and acidic residues: residues 652 to 664 and 671 to 696; these read LKAE…REAT and RKEE…DEQR. Positions 652–751 are disordered; sequence LKAEQHRKER…KRSRRGKVGQ (100 aa). The interval 668–935 is interaction with SMARCA5; that stretch reads IRRRKEEKLK…QEKSRICAQL (268 aa). The tract at residues 668-935 is required for interaction with SMARCA5 and formation of the CHRAC ISWI chromatin remodeling complex; sequence IRRRKEEKLK…QEKSRICAQL (268 aa). Composition is skewed to acidic residues over residues 705–714 and 728–737; these read GEEEREDFDT and PDVVTEDEDD. Thr-732 carries the phosphothreonine modification. Residues 773 to 798 are a coiled coil; it reads SADAEEALRQEQQQKEKELLDKIQSA. 2 disordered regions span residues 843-874 and 944-969; these read PSSF…SSLD and HFSD…CDIS. Residues 864–873 are compositionally biased toward low complexity; that stretch reads SFLSESTSSL. Residue Lys-954 forms a Glycyl lysine isopeptide (Lys-Gly) (interchain with G-Cter in SUMO2) linkage. 2 positions are modified to phosphoserine: Ser-962 and Ser-963. The PHD-type zinc finger occupies 1149–1199; sequence NARCKICRKKGDAENMVLCDGCDRGHHTYCVRPKLKAVPDGDWFCPECRPK. Residues 1203-1429 form a disordered region; sequence RRLSSRQRPS…LNRRSSGRQG (227 aa). Positions 1214–1258 are enriched in acidic residues; it reads ESDEEMEEGMEDDDDEVDDDDEEGQSEEEEYEVEQDEEDSDDDEA. A compositionally biased stretch (basic residues) spans 1263–1277; the sequence is KRGRPQVRLPIKTKG. At Ser-1282 the chain carries Phosphoserine. Polar residues predominate over residues 1297-1313; the sequence is SRSQQSTPKNTAKSASK. 7 positions are modified to phosphoserine: Ser-1320, Ser-1339, Ser-1352, Ser-1370, Ser-1401, Ser-1412, and Ser-1416. Polar residues predominate over residues 1369 to 1386; sequence HSPSFTNFRVSTSRSSRQ. The Bromo domain maps to 1429 to 1532; the sequence is GGVHELSAFE…AFFHIQAQKL (104 aa). Phosphothreonine is present on Thr-1546.

It belongs to the WAL family. In terms of assembly, component of the ACF-1 ISWI chromatin remodeling complex at least composed of SMARCA1 and BAZ1A, which regulates the spacing of histone octamers on the DNA template to facilitate access to DNA. Within the ACF-1 ISWI chromatin remodeling complex interacts with SMARCA1; the interaction is direct. Component of the ACF-5 ISWI chromatin remodeling complex (also called the ACF complex) at least composed of BAZ1A and SMARCA5/SNF2H, which regulates the spacing of histone octamers on the DNA template to facilitate access to DNA. Within the ACF-5 ISWI chromatin remodeling complex interacts with SMARCA5/SNF2H; the interaction is direct. Component of the CHRAC ISWI chromatin remodeling complex at least composed of SMARCA5/SNF2H, BAZ1A/ACF1, CHRAC1 and POLE3; the complex preferentially binds DNA through the CHRAC1-POLE3 heterodimer and possesses ATP-dependent nucleosome-remodeling activity. Within the complex interacts (via N-terminus) with POLE3-CHRAC1 heterodimer; the interaction is direct and is required for the complex to preferentially bind to DNA. Within the complex interacts with SMARCA5/SNF2H; the interaction is direct and promotes the interaction with the POLE3-CHRAC1 heterodimer. Interacts with NCOR1 (via its RD1 domain); the interaction corepresses a number of NCOR1-regulated genes.

Its subcellular location is the nucleus. Functionally, regulatory subunit of the ATP-dependent ACF-1 and ACF-5 ISWI chromatin remodeling complexes, which form ordered nucleosome arrays on chromatin and slide edge- and center-positioned histone octamers away from their original location on the DNA template to facilitate access to DNA during DNA-templated processes such as DNA replication, transcription, and repair. Both complexes regulate the spacing of nucleosomes along the chromatin and have the ability to slide mononucleosomes to the center of a DNA template in an ATP-dependent manner. The ACF-1 ISWI chromatin remodeling complex has a lower ATP hydrolysis rate than the ACF-5 ISWI chromatin remodeling complex. Has a role in sensing the length of DNA which flank nucleosomes, which modulates the nucleosome spacing activity of the ACF-5 ISWI chromatin remodeling complex. Involved in DNA replication and together with SMARCA5/SNF2H is required for replication of pericentric heterochromatin in S-phase. May have a role in nuclear receptor-mediated transcription repression. In Mus musculus (Mouse), this protein is Bromodomain adjacent to zinc finger domain protein 1A (Baz1a).